The sequence spans 377 residues: Anhydro-N-acetylmuramic acid kinase (377 aa).

19 to 26 (GTSLDGVD) contacts ATP.

This sequence belongs to the anhydro-N-acetylmuramic acid kinase family.

It carries out the reaction 1,6-anhydro-N-acetyl-beta-muramate + ATP + H2O = N-acetyl-D-muramate 6-phosphate + ADP + H(+). It functions in the pathway amino-sugar metabolism; 1,6-anhydro-N-acetylmuramate degradation. It participates in cell wall biogenesis; peptidoglycan recycling. Functionally, catalyzes the specific phosphorylation of 1,6-anhydro-N-acetylmuramic acid (anhMurNAc) with the simultaneous cleavage of the 1,6-anhydro ring, generating MurNAc-6-P. Is required for the utilization of anhMurNAc either imported from the medium or derived from its own cell wall murein, and thus plays a role in cell wall recycling. This chain is Anhydro-N-acetylmuramic acid kinase, found in Roseobacter denitrificans (strain ATCC 33942 / OCh 114) (Erythrobacter sp. (strain OCh 114)).